Here is a 201-residue protein sequence, read N- to C-terminus: Mediator of RNA polymerase II transcription subunit 22 (201 aa).

Residues 93-123 (SVNESINQRNQQLRTLREECDKKLIALRDDI) are a coiled coil. The segment at 182-201 (SQIHTPPHLNGHGAGMTEHT) is disordered.

This sequence belongs to the Mediator complex subunit 22 family. Component of the Mediator complex.

It localises to the nucleus. Its function is as follows. Component of the Mediator complex, a coactivator involved in the regulated transcription of nearly all RNA polymerase II-dependent genes. Mediator functions as a bridge to convey information from gene-specific regulatory proteins to the basal RNA polymerase II transcription machinery. Mediator is recruited to promoters by direct interactions with regulatory proteins and serves as a scaffold for the assembly of a functional preinitiation complex with RNA polymerase II and the general transcription factors. In Xenopus laevis (African clawed frog), this protein is Mediator of RNA polymerase II transcription subunit 22 (med22).